The sequence spans 468 residues: H(+)/Cl(-) exchange transporter ClcA (468 aa).

Residues 1 to 30 (MSTRETFKISLLAKMPKDVINQFLSKDKTP) are Cytoplasmic-facing. The chain crosses the membrane as a helical span at residues 31-67 (FSVLFLSLLVGILAGLVGTYFEQAVHLVSETRTDWLK). At 68 to 74 (SEIGSFL) the chain is on the periplasmic side. A helical membrane pass occupies residues 75-98 (PLWLAAFLISAFLAFIGYFLVHRF). Residues 104-108 (GSGIP) carry the Selectivity filter part_1 motif. Ser105 provides a ligand contact to chloride. Positions 107 to 114 (IPEIEGAM) form an intramembrane region, helical. The Cytoplasmic portion of the chain corresponds to 115-121 (DGMRPVR). The next 2 helical transmembrane spans lie at 122 to 139 (WWRVLPVKFFGGMGALGS) and 146 to 164 (EGPTVQMGGAVGRMISDIF). The Selectivity filter part_2 signature appears at 144–148 (GREGP). Residues 165–174 (RVKNEDTRHS) are Cytoplasmic-facing. 2 intramembrane regions (helical) span residues 175–187 (LLAAGAAGGLAAA) and 191–199 (PLAGIMFVI). Residues 200-212 (EEMRPQFRYTLIS) lie on the Cytoplasmic side of the membrane. Residues 213–230 (VRAVIISAVAANIVFRVI) traverse the membrane as a helical segment. Residues 231–250 (NGQDAVITMPQYDAPELSTL) are Periplasmic-facing. A helical transmembrane segment spans residues 251–279 (GLFLLLGALFGVFGVLFNYLITLAQDLFV). At 280-285 (KFHRND) the chain is on the cytoplasmic side. The helical transmembrane segment at 286 to 307 (RKRYLLTGSMIGGCFGLLLLYV) threads the bilayer. The Periplasmic segment spans residues 308-327 (PELTGGGISLIPTITNGGYG). Transmembrane regions (helical) follow at residues 328 to 347 (AGILLLLFVGRIFTTLLCFG) and 353 to 374 (GIFAPMLALGTLFGYAFGLIAK). Residues 353–357 (GIFAP) carry the Selectivity filter part_3 motif. Residues Ile354 and Phe355 each contribute to the chloride site. Topologically, residues 375–384 (MWFPELNIEP) are periplasmic. Positions 385–399 (GMFAIAGMGALFAAT) form an intramembrane region, helical. Positions 400-402 (VRA) form an intramembrane region, note=Loop between two helices. An intramembrane region (helical) is located at residues 403–414 (PITGILLVIEMT). Residues 415 to 419 (NNYHL) constitute an intramembrane region (note=Loop between two helices). The helical transmembrane segment at 420 to 436 (ILPLIITSLGAVIFAQL) threads the bilayer. Over 437–468 (LGGQPIYSQLLHRTLKNQKLQQQDLPPQSPNS) the chain is Cytoplasmic. Tyr443 is a binding site for chloride.

The protein belongs to the chloride channel (TC 2.A.49) family. ClcA subfamily. Homodimer.

It localises to the cell inner membrane. The enzyme catalyses 2 chloride(in) + H(+)(out) = 2 chloride(out) + H(+)(in). Functionally, proton-coupled chloride transporter. Functions as antiport system and exchanges two chloride ions for 1 proton. Probably acts as an electrical shunt for an outwardly-directed proton pump that is linked to amino acid decarboxylation, as part of the extreme acid resistance (XAR) response. This is H(+)/Cl(-) exchange transporter ClcA from Vibrio cholerae serotype O1 (strain ATCC 39315 / El Tor Inaba N16961).